The sequence spans 371 residues: Glutamate 5-kinase (371 aa).

ATP is bound at residue lysine 12. The substrate site is built by serine 52, aspartate 136, and asparagine 148. ATP is bound by residues 168 to 169 (SD) and 210 to 216 (TGGMRTK). Positions 275–354 (QGEILVDEGA…EDIAEKFGYS (80 aa)) constitute a PUA domain.

Belongs to the glutamate 5-kinase family.

Its subcellular location is the cytoplasm. The enzyme catalyses L-glutamate + ATP = L-glutamyl 5-phosphate + ADP. It participates in amino-acid biosynthesis; L-proline biosynthesis; L-glutamate 5-semialdehyde from L-glutamate: step 1/2. Functionally, catalyzes the transfer of a phosphate group to glutamate to form L-glutamate 5-phosphate. This chain is Glutamate 5-kinase, found in Idiomarina loihiensis (strain ATCC BAA-735 / DSM 15497 / L2-TR).